The sequence spans 232 residues: 2-C-methyl-D-erythritol 4-phosphate cytidylyltransferase (232 aa).

This sequence belongs to the IspD/TarI cytidylyltransferase family. IspD subfamily.

The catalysed reaction is 2-C-methyl-D-erythritol 4-phosphate + CTP + H(+) = 4-CDP-2-C-methyl-D-erythritol + diphosphate. Its pathway is isoprenoid biosynthesis; isopentenyl diphosphate biosynthesis via DXP pathway; isopentenyl diphosphate from 1-deoxy-D-xylulose 5-phosphate: step 2/6. In terms of biological role, catalyzes the formation of 4-diphosphocytidyl-2-C-methyl-D-erythritol from CTP and 2-C-methyl-D-erythritol 4-phosphate (MEP). The polypeptide is 2-C-methyl-D-erythritol 4-phosphate cytidylyltransferase (Synechococcus sp. (strain ATCC 27144 / PCC 6301 / SAUG 1402/1) (Anacystis nidulans)).